Reading from the N-terminus, the 264-residue chain is [LysW]-aminoadipate/[LysW]-glutamate kinase (264 aa).

Substrate-binding positions include 35–36, Arg-62, and Asn-167; that span reads GG.

It belongs to the acetylglutamate kinase family. LysZ subfamily.

The protein resides in the cytoplasm. It carries out the reaction [amino-group carrier protein]-C-terminal-N-(1,4-dicarboxybutan-1-yl)-L-glutamine + ATP = [amino-group carrier protein]-C-terminal-N-(1-carboxy-5-phosphooxy-5-oxopentan-1-yl)-L-glutamine + ADP. The enzyme catalyses [amino-group carrier protein]-C-terminal-gamma-(L-glutamyl)-L-glutamate + ATP = [amino-group carrier protein]-C-terminal-gamma-(5-phospho-L-glutamyl)-L-glutamate + ADP. It functions in the pathway amino-acid biosynthesis; L-lysine biosynthesis via AAA pathway; L-lysine from L-alpha-aminoadipate (Thermus route): step 2/5. It participates in amino-acid biosynthesis; L-arginine biosynthesis. Involved in both the arginine and lysine biosynthetic pathways. Phosphorylates the LysW-bound precursors glutamate (for arginine biosynthesis), respectively alpha-aminoadipate (for lysine biosynthesis). The protein is [LysW]-aminoadipate/[LysW]-glutamate kinase of Saccharolobus islandicus (strain L.S.2.15 / Lassen #1) (Sulfolobus islandicus).